A 472-amino-acid polypeptide reads, in one-letter code: 2-oxoglutarate carboxylase small subunit (472 aa).

The Biotin carboxylation domain maps to 1–445 (MFKKVLVANR…TTRYLEEHPH (445 aa)). Positions 115 and 199 each coordinate ATP. The ATP-grasp domain maps to 119 to 316 (KEVMKRAGVP…IVKWQIRIAA (198 aa)). The active site involves Arg291.

As to quaternary structure, heterohexadecamer of 8 large subunits and 8 small subunits. Requires Mg(2+) as cofactor. Mn(2+) serves as cofactor. The cofactor is Co(2+).

The enzyme catalyses hydrogencarbonate + 2-oxoglutarate + ATP = (S)-oxalosuccinate + ADP + phosphate + H(+). The sequence is that of 2-oxoglutarate carboxylase small subunit from Hydrogenobacter thermophilus (strain DSM 6534 / IAM 12695 / TK-6).